The following is a 446-amino-acid chain: Tryptophan synthase beta chain 2 (446 aa).

N6-(pyridoxal phosphate)lysine is present on Lys110.

The protein belongs to the TrpB family. In terms of assembly, tetramer of two alpha and two beta chains. It depends on pyridoxal 5'-phosphate as a cofactor.

The enzyme catalyses (1S,2R)-1-C-(indol-3-yl)glycerol 3-phosphate + L-serine = D-glyceraldehyde 3-phosphate + L-tryptophan + H2O. The protein operates within amino-acid biosynthesis; L-tryptophan biosynthesis; L-tryptophan from chorismate: step 5/5. Functionally, the beta subunit is responsible for the synthesis of L-tryptophan from indole and L-serine. The sequence is that of Tryptophan synthase beta chain 2 (trpB2) from Pyrococcus furiosus (strain ATCC 43587 / DSM 3638 / JCM 8422 / Vc1).